The primary structure comprises 261 residues: 14-3-3 protein 8 (261 aa).

Residues 237 to 261 (DIPEDGEEAPKGDAANKVGAGEDAE) are disordered.

Belongs to the 14-3-3 family. Homodimer.

In Solanum lycopersicum (Tomato), this protein is 14-3-3 protein 8 (TFT8).